The following is a 240-amino-acid chain: uncharacterized protein (240 aa).

The disordered stretch occupies residues 216 to 240; the sequence is MKQSKNKPRIRQAVGATRQCRKPQA.

This is an uncharacterized protein from Escherichia coli (strain K12).